The following is a 612-amino-acid chain: Dihydroxy-acid dehydratase (612 aa).

Aspartate 81 is a Mg(2+) binding site. [2Fe-2S] cluster is bound at residue cysteine 122. 2 residues coordinate Mg(2+): aspartate 123 and lysine 124. At lysine 124 the chain carries N6-carboxylysine. Cysteine 193 contributes to the [2Fe-2S] cluster binding site. Glutamate 489 contacts Mg(2+). Serine 515 serves as the catalytic Proton acceptor.

Belongs to the IlvD/Edd family. Homodimer. Requires [2Fe-2S] cluster as cofactor. The cofactor is Mg(2+).

The catalysed reaction is (2R)-2,3-dihydroxy-3-methylbutanoate = 3-methyl-2-oxobutanoate + H2O. The enzyme catalyses (2R,3R)-2,3-dihydroxy-3-methylpentanoate = (S)-3-methyl-2-oxopentanoate + H2O. The protein operates within amino-acid biosynthesis; L-isoleucine biosynthesis; L-isoleucine from 2-oxobutanoate: step 3/4. Its pathway is amino-acid biosynthesis; L-valine biosynthesis; L-valine from pyruvate: step 3/4. Functionally, functions in the biosynthesis of branched-chain amino acids. Catalyzes the dehydration of (2R,3R)-2,3-dihydroxy-3-methylpentanoate (2,3-dihydroxy-3-methylvalerate) into 2-oxo-3-methylpentanoate (2-oxo-3-methylvalerate) and of (2R)-2,3-dihydroxy-3-methylbutanoate (2,3-dihydroxyisovalerate) into 2-oxo-3-methylbutanoate (2-oxoisovalerate), the penultimate precursor to L-isoleucine and L-valine, respectively. In Xanthomonas oryzae pv. oryzae (strain MAFF 311018), this protein is Dihydroxy-acid dehydratase.